The sequence spans 425 residues: Apolipoprotein N-acyltransferase (425 aa).

6 helical membrane passes run 12 to 32 (LLAC…AYAI), 34 to 54 (NPYI…LAFL), 60 to 80 (SAFA…ALSF), 88 to 108 (LLPL…YLLL), 120 to 140 (FLGS…DSFF), and 142 to 162 (YSVF…CIFL). Residues 201-425 (VSTKTPQDLK…LGDILFRKRS (225 aa)) form the CN hydrolase domain. Glu242 acts as the Proton acceptor in catalysis. The active site involves Lys296. Residue Cys349 is the Nucleophile of the active site.

Belongs to the CN hydrolase family. Apolipoprotein N-acyltransferase subfamily.

The protein resides in the cell inner membrane. It carries out the reaction N-terminal S-1,2-diacyl-sn-glyceryl-L-cysteinyl-[lipoprotein] + a glycerophospholipid = N-acyl-S-1,2-diacyl-sn-glyceryl-L-cysteinyl-[lipoprotein] + a 2-acyl-sn-glycero-3-phospholipid + H(+). The protein operates within protein modification; lipoprotein biosynthesis (N-acyl transfer). Catalyzes the phospholipid dependent N-acylation of the N-terminal cysteine of apolipoprotein, the last step in lipoprotein maturation. The protein is Apolipoprotein N-acyltransferase of Helicobacter pylori (strain ATCC 700392 / 26695) (Campylobacter pylori).